Reading from the N-terminus, the 462-residue chain is G-patch domain and KOW motifs-containing protein homolog 1 (462 aa).

2 disordered regions span residues 1 to 26 and 182 to 218; these read MVEQ…KREE and LKLP…EEEK. The G-patch domain maps to 154–202; it reads IESFGLAILRGCNWKDGDGIGKNPQKVALKLPNRRPPGLGLGATPKNPV. The KOW 1 domain maps to 221–248; that stretch reads EIKVGSFIKVVDGRNKGVYGKVEGRDDD. Positions 289 to 305 are enriched in basic and acidic residues; the sequence is EYDKEKDRLETERKKLE. The interval 289–337 is disordered; the sequence is EYDKEKDRLETERKKLESQPPSTSTSQSSKDYKSKSSSSKHDKNSSEYE. Low complexity predominate over residues 306–317; it reads SQPPSTSTSQSS. Residues 318–337 are compositionally biased toward basic and acidic residues; that stretch reads KDYKSKSSSSKHDKNSSEYE. Residues 401-428 form the KOW 2 domain; sequence PREIGEKLMIVAGKRSGQLAVMLDKDKR.

It belongs to the MOS2 family.

The protein resides in the nucleus. The chain is G-patch domain and KOW motifs-containing protein homolog 1 from Caenorhabditis elegans.